Here is a 238-residue protein sequence, read N- to C-terminus: Orotate phosphoribosyltransferase (238 aa).

Residue K29 participates in 5-phospho-alpha-D-ribose 1-diphosphate binding. 37 to 38 contacts orotate; it reads FF. Residues 87-88, R118, K119, K122, H124, and 144-152 each bind 5-phospho-alpha-D-ribose 1-diphosphate; these read YK and DDVITAGTA. T148 and R176 together coordinate orotate.

The protein belongs to the purine/pyrimidine phosphoribosyltransferase family. PyrE subfamily. As to quaternary structure, homodimer.

The catalysed reaction is orotidine 5'-phosphate + diphosphate = orotate + 5-phospho-alpha-D-ribose 1-diphosphate. It participates in pyrimidine metabolism; UMP biosynthesis via de novo pathway; UMP from orotate: step 1/2. Functionally, catalyzes the transfer of a ribosyl phosphate group from 5-phosphoribose 1-diphosphate to orotate, leading to the formation of orotidine monophosphate (OMP). The protein is Orotate phosphoribosyltransferase (URA5) of Coccidioides immitis (strain RS) (Valley fever fungus).